A 94-amino-acid polypeptide reads, in one-letter code: Small ribosomal subunit protein uS19 (94 aa).

Belongs to the universal ribosomal protein uS19 family.

Protein S19 forms a complex with S13 that binds strongly to the 16S ribosomal RNA. The protein is Small ribosomal subunit protein uS19 of Moorella thermoacetica (strain ATCC 39073 / JCM 9320).